We begin with the raw amino-acid sequence, 277 residues long: Digeranylgeranylglyceryl phosphate synthase (277 aa).

Transmembrane regions (helical) follow at residues 16 to 36 (ILAG…IPSI), 40 to 60 (GLVF…NDYF), 101 to 121 (FLGV…FIYA), 129 to 149 (FIGN…GALG), 153 to 173 (VGLA…REIM), 205 to 225 (IFGV…IGLG), and 257 to 277 (LKIA…TKGV).

This sequence belongs to the UbiA prenyltransferase family. DGGGP synthase subfamily. Mg(2+) serves as cofactor.

The protein resides in the cell membrane. It catalyses the reaction sn-3-O-(geranylgeranyl)glycerol 1-phosphate + (2E,6E,10E)-geranylgeranyl diphosphate = 2,3-bis-O-(geranylgeranyl)-sn-glycerol 1-phosphate + diphosphate. The protein operates within membrane lipid metabolism; glycerophospholipid metabolism. Functionally, prenyltransferase that catalyzes the transfer of the geranylgeranyl moiety of geranylgeranyl diphosphate (GGPP) to the C2 hydroxyl of (S)-3-O-geranylgeranylglyceryl phosphate (GGGP). This reaction is the second ether-bond-formation step in the biosynthesis of archaeal membrane lipids. The chain is Digeranylgeranylglyceryl phosphate synthase from Pyrococcus abyssi (strain GE5 / Orsay).